The primary structure comprises 468 residues: Neuraminidase (468 aa).

The Intravirion portion of the chain corresponds to 1–15; it reads MNPNQKIITIGSASL. An involved in apical transport and lipid raft association region spans residues 11–33; sequence GSASLGLVIFNILLHVASITLGI. Residues 16-36 form a helical membrane-spanning segment; it reads GLVIFNILLHVASITLGIISV. The segment at 36–80 is hypervariable stalk region; the sequence is VTKDNKVHICNTTEVYNETVRVETVVIPVNNTIYLNHEPEFLNNT. Residues 37–468 lie on the Virion surface side of the membrane; that stretch reads TKDNKVHICN…AILPFDIDKM (432 aa). N-linked (GlcNAc...) asparagine; by host glycosylation is found at N46, N52, N65, and N78. The interval 83–468 is head of neuraminidase; that stretch reads LCDVSGFAIV…AILPFDIDKM (386 aa). Disulfide bonds link C84/C414, C116/C121, C176/C223, C225/C230, C271/C284, C273/C282, C310/C329, and C418/C444. R110 serves as a coordination point for substrate. Residue N138 is glycosylated (N-linked (GlcNAc...) asparagine; by host). D143 acts as the Proton donor/acceptor in catalysis. Position 144 (R144) interacts with substrate. 269 to 270 is a binding site for substrate; the sequence is EE. R285 provides a ligand contact to substrate. 3 residues coordinate Ca(2+): D286, G290, and D316. R365 serves as a coordination point for substrate. N395 is a glycosylation site (N-linked (GlcNAc...) asparagine; by host). Y399 (nucleophile) is an active-site residue.

The protein belongs to the glycosyl hydrolase 34 family. In terms of assembly, homotetramer. It depends on Ca(2+) as a cofactor. Post-translationally, N-glycosylated.

The protein resides in the virion membrane. It localises to the host apical cell membrane. The enzyme catalyses Hydrolysis of alpha-(2-&gt;3)-, alpha-(2-&gt;6)-, alpha-(2-&gt;8)- glycosidic linkages of terminal sialic acid residues in oligosaccharides, glycoproteins, glycolipids, colominic acid and synthetic substrates.. Inhibited by the neuraminidase inhibitors zanamivir (Relenza) and oseltamivir (Tamiflu). These drugs interfere with the release of progeny virus from infected cells and are effective against all influenza strains. Resistance to neuraminidase inhibitors is quite rare. Catalyzes the removal of terminal sialic acid residues from viral and cellular glycoconjugates. Cleaves off the terminal sialic acids on the glycosylated HA during virus budding to facilitate virus release. Additionally helps virus spread through the circulation by further removing sialic acids from the cell surface. These cleavages prevent self-aggregation and ensure the efficient spread of the progeny virus from cell to cell. Otherwise, infection would be limited to one round of replication. Described as a receptor-destroying enzyme because it cleaves a terminal sialic acid from the cellular receptors. May facilitate viral invasion of the upper airways by cleaving the sialic acid moieties on the mucin of the airway epithelial cells. Likely to plays a role in the budding process through its association with lipid rafts during intracellular transport. May additionally display a raft-association independent effect on budding. Plays a role in the determination of host range restriction on replication and virulence. Sialidase activity in late endosome/lysosome traffic seems to enhance virus replication. The chain is Neuraminidase from Aves.